The primary structure comprises 317 residues: Protoheme IX farnesyltransferase (317 aa).

A run of 9 helical transmembrane segments spans residues 43–63, 65–85, 119–139, 140–160, 168–188, 195–215, 238–258, 261–281, and 292–312; these read PISVGLLAFTAAAMMVVAGAT, PVSGWLFVQALLAVVLACAGA, ALYWGLFLFVASLGLAWNLNP, IAWITLWGGMLGYVVVYSLWL, IVIGGVSGGMPALFGWAAVTG, VLIAALVVLWIPNHIWSLAIF, LNWLLLTVVLMVVFSVLIYFV, WGLVYLATALVMGAAALALSV, and AWVLFKFSSPYLAVLFLSMMV.

The protein belongs to the UbiA prenyltransferase family. Protoheme IX farnesyltransferase subfamily. In terms of assembly, interacts with CtaA.

The protein localises to the cell membrane. It catalyses the reaction heme b + (2E,6E)-farnesyl diphosphate + H2O = Fe(II)-heme o + diphosphate. It participates in porphyrin-containing compound metabolism; heme O biosynthesis; heme O from protoheme: step 1/1. Its function is as follows. Converts heme B (protoheme IX) to heme O by substitution of the vinyl group on carbon 2 of heme B porphyrin ring with a hydroxyethyl farnesyl side group. This Desulforudis audaxviator (strain MP104C) protein is Protoheme IX farnesyltransferase.